The sequence spans 367 residues: Methylthioribose-1-phosphate isomerase (367 aa).

Substrate contacts are provided by residues 54-56, Arg91, and Gln201; that span reads RGA. Residue Asp242 is the Proton donor of the active site. Position 252–253 (252–253) interacts with substrate; it reads NK.

This sequence belongs to the eIF-2B alpha/beta/delta subunits family. MtnA subfamily.

It catalyses the reaction 5-(methylsulfanyl)-alpha-D-ribose 1-phosphate = 5-(methylsulfanyl)-D-ribulose 1-phosphate. Its pathway is amino-acid biosynthesis; L-methionine biosynthesis via salvage pathway; L-methionine from S-methyl-5-thio-alpha-D-ribose 1-phosphate: step 1/6. Functionally, catalyzes the interconversion of methylthioribose-1-phosphate (MTR-1-P) into methylthioribulose-1-phosphate (MTRu-1-P). In Acidiphilium cryptum (strain JF-5), this protein is Methylthioribose-1-phosphate isomerase.